We begin with the raw amino-acid sequence, 409 residues long: NADH-quinone oxidoreductase subunit D (409 aa).

This sequence belongs to the complex I 49 kDa subunit family. NDH-1 is composed of 14 different subunits. Subunits NuoB, C, D, E, F, and G constitute the peripheral sector of the complex.

It is found in the cell inner membrane. The enzyme catalyses a quinone + NADH + 5 H(+)(in) = a quinol + NAD(+) + 4 H(+)(out). Functionally, NDH-1 shuttles electrons from NADH, via FMN and iron-sulfur (Fe-S) centers, to quinones in the respiratory chain. The immediate electron acceptor for the enzyme in this species is believed to be ubiquinone. Couples the redox reaction to proton translocation (for every two electrons transferred, four hydrogen ions are translocated across the cytoplasmic membrane), and thus conserves the redox energy in a proton gradient. The sequence is that of NADH-quinone oxidoreductase subunit D from Helicobacter hepaticus (strain ATCC 51449 / 3B1).